The chain runs to 220 residues: Deoxyribose-phosphate aldolase (220 aa).

Catalysis depends on D89, which acts as the Proton donor/acceptor. K151 serves as the catalytic Schiff-base intermediate with acetaldehyde. K180 (proton donor/acceptor) is an active-site residue.

Belongs to the DeoC/FbaB aldolase family. DeoC type 1 subfamily.

It is found in the cytoplasm. It carries out the reaction 2-deoxy-D-ribose 5-phosphate = D-glyceraldehyde 3-phosphate + acetaldehyde. It functions in the pathway carbohydrate degradation; 2-deoxy-D-ribose 1-phosphate degradation; D-glyceraldehyde 3-phosphate and acetaldehyde from 2-deoxy-alpha-D-ribose 1-phosphate: step 2/2. Functionally, catalyzes a reversible aldol reaction between acetaldehyde and D-glyceraldehyde 3-phosphate to generate 2-deoxy-D-ribose 5-phosphate. The sequence is that of Deoxyribose-phosphate aldolase from Deinococcus radiodurans (strain ATCC 13939 / DSM 20539 / JCM 16871 / CCUG 27074 / LMG 4051 / NBRC 15346 / NCIMB 9279 / VKM B-1422 / R1).